We begin with the raw amino-acid sequence, 201 residues long: Inosine triphosphate pyrophosphatase (201 aa).

13-18 (TGNAKK) contributes to the ITP binding site. Glutamate 43 contacts Mg(2+). ITP-binding positions include lysine 55, 71–72 (DT), lysine 88, 148–151 (FGWD), lysine 171, and 176–177 (HR).

Belongs to the HAM1 NTPase family. In terms of assembly, homodimer. Mg(2+) is required as a cofactor. It depends on Mn(2+) as a cofactor.

It localises to the cytoplasm. The catalysed reaction is ITP + H2O = IMP + diphosphate + H(+). It catalyses the reaction dITP + H2O = dIMP + diphosphate + H(+). The enzyme catalyses XTP + H2O = XMP + diphosphate + H(+). It carries out the reaction N(6)-hydroxy-dATP + H2O = N(6)-hydroxy-dAMP + diphosphate + H(+). Functionally, pyrophosphatase that hydrolyzes the non-canonical purine nucleotides inosine triphosphate (ITP), deoxyinosine triphosphate (dITP) as well as 2'-deoxy-N-6-hydroxylaminopurine triphosphate (dHAPTP) and xanthosine 5'-triphosphate (XTP) to their respective monophosphate derivatives. The enzyme does not distinguish between the deoxy- and ribose forms. Probably excludes non-canonical purines from RNA and DNA precursor pools, thus preventing their incorporation into RNA and DNA and avoiding chromosomal lesions. This chain is Inosine triphosphate pyrophosphatase, found in Gallus gallus (Chicken).